We begin with the raw amino-acid sequence, 1058 residues long: MPIDKDIKKVLIIGSGPIQIGQAAEFDYSGSQACKSLREEGIETVLVNSNPATIQTDMDMADTVYTEPLTPEIVSEIIKKENVDAILPTMGGQTGLNIATGLGDLGLLDGIKVLGSDIQTIKDVEDRDLFGHFMDKLNEPIPKCHAVESVEEAIEAVKDIGYPVIVRPAFTLGGTGGGVAYNEEELIEIATHGLDMSFINQVLIDESVLGWKEFEYEVMRDKEDTCIIVCNMENIDPMGIHTGESVVVAPAQNLNDRDSQALRDASIKIIRALGIQGGCNIQFAVNPETGEYKVIEVNPRVSRSSALASKATGYPIAKISSKIALGMTLDEIKNDITKETPASFEPAIDYVVVKIPRWPFDKFRGINREIGVQMKATGEVMAIGRTFEEAIQKAIRSLDMGHDGFEYVEYTEDDLANPTDERLFQLYSAIKDGMDLDKIQKLTNIDKFFLYKIRNIVNFENEVTEEKLNDADFLRKAKQMGCSNKRLAALSNQTEEYIRNLLNRFNIKQSYKMVDTCAAEFEAKTPYYYSTYDSGNELKSSNKKKIVILGAGPIRIGQGIEFDYCCVHSSLALKDEGIETILINNNPETVSTDYDISDKLFFEPITFEDVMGIIDQEKPDGVIVQFGGQTSINLAVPLANAGVKILGTPYESIDGVEDRELFAKLLNKLHIHQAPYGTANSFEEAREIAERITFPVLVRPSYVIGGRAMEIVYDNNELEKYMKEAVKVSPEHPILVDKFLEDAIELDVDVLCDGEEVFIAGIMEHIEEAGVHSGDSACVIPPQTIPEHILNTIREYSTKLALELDVKGLMNIQYAVKLDEEMVYIIEANPRASRTVPFVSKAIGVPLAKVATWIMTGAKLKDFNLTKEIKIDHVAVKESVFPFLKLPESDTVLGPEMKSTGESIGVDENFGMAFYKSQLAAGMDLPKEGKIFISVKEQDKKKIRPIAEKAANLGFELAATSGTADAAKGVDIEKIKKVSQGSPNIRDAILNKEIDLIINTSEGKQSAQDGYIIRRLAIELGIPYVTTLSGARAALNAIEAVQNNEITVKSLNEHIDGE.

A carboxyphosphate synthetic domain region spans residues Met-1–Asp-399. 12 residues coordinate ATP: Arg-127, Arg-167, Gly-173, Gly-174, Glu-206, Val-208, Glu-213, Gly-239, Ile-240, His-241, Gln-282, and Glu-296. One can recognise an ATP-grasp 1 domain in the interval Gly-131–Leu-325. Residues Gln-282, Glu-296, and Asn-298 each contribute to the Mg(2+) site. Gln-282, Glu-296, and Asn-298 together coordinate Mn(2+). The oligomerization domain stretch occupies residues Met-400–Leu-538. The interval Lys-539–Asp-924 is carbamoyl phosphate synthetic domain. The 194-residue stretch at Ala-663–Thr-856 folds into the ATP-grasp 2 domain. Residues Arg-699, Lys-738, Leu-740, Glu-745, Gly-770, Val-771, His-772, Ser-773, Gln-813, and Glu-827 each contribute to the ATP site. The Mg(2+) site is built by Gln-813, Glu-827, and Asn-829. Residues Gln-813, Glu-827, and Asn-829 each coordinate Mn(2+). An MGS-like domain is found at Met-923–Glu-1058. An allosteric domain region spans residues Leu-925–Glu-1058.

It belongs to the CarB family. As to quaternary structure, composed of two chains; the small (or glutamine) chain promotes the hydrolysis of glutamine to ammonia, which is used by the large (or ammonia) chain to synthesize carbamoyl phosphate. Tetramer of heterodimers (alpha,beta)4. Mg(2+) is required as a cofactor. Mn(2+) serves as cofactor.

The enzyme catalyses hydrogencarbonate + L-glutamine + 2 ATP + H2O = carbamoyl phosphate + L-glutamate + 2 ADP + phosphate + 2 H(+). It catalyses the reaction hydrogencarbonate + NH4(+) + 2 ATP = carbamoyl phosphate + 2 ADP + phosphate + 2 H(+). It participates in amino-acid biosynthesis; L-arginine biosynthesis; carbamoyl phosphate from bicarbonate: step 1/1. It functions in the pathway pyrimidine metabolism; UMP biosynthesis via de novo pathway; (S)-dihydroorotate from bicarbonate: step 1/3. Large subunit of the glutamine-dependent carbamoyl phosphate synthetase (CPSase). CPSase catalyzes the formation of carbamoyl phosphate from the ammonia moiety of glutamine, carbonate, and phosphate donated by ATP, constituting the first step of 2 biosynthetic pathways, one leading to arginine and/or urea and the other to pyrimidine nucleotides. The large subunit (synthetase) binds the substrates ammonia (free or transferred from glutamine from the small subunit), hydrogencarbonate and ATP and carries out an ATP-coupled ligase reaction, activating hydrogencarbonate by forming carboxy phosphate which reacts with ammonia to form carbamoyl phosphate. This Methanobrevibacter smithii (strain ATCC 35061 / DSM 861 / OCM 144 / PS) protein is Carbamoyl phosphate synthase large chain.